Here is a 217-residue protein sequence, read N- to C-terminus: Probable GTP-binding protein EngB (217 aa).

In terms of domain architecture, EngB-type G spans 32-205; that stretch reads GTPQIAFAGR…RKIVYSLIET (174 aa). GTP contacts are provided by residues 40–47, 67–71, 85–88, 152–155, and 184–186; these read GRSNAGKS, GKTKL, DLPG, TKID, and VSN. Residues serine 47 and threonine 69 each coordinate Mg(2+).

Belongs to the TRAFAC class TrmE-Era-EngA-EngB-Septin-like GTPase superfamily. EngB GTPase family. It depends on Mg(2+) as a cofactor.

Its function is as follows. Necessary for normal cell division and for the maintenance of normal septation. The polypeptide is Probable GTP-binding protein EngB (Leptospira interrogans serogroup Icterohaemorrhagiae serovar copenhageni (strain Fiocruz L1-130)).